The sequence spans 381 residues: MINMRKTHPLMKIINHSFIDLPTPSNISAWWNFGSLLGMCLIIQILTGLFLAMHYTSDTLTAFSSVAHICRDVNHGWLLRNLHANGASMFFMCLFLHVGRGIYYGSYLYKETWNIGVILLLTVMATAFVGYVLPWGQMSFWGATVITNLLSAIPYIGTTLAEWIWGGFAVDKATLTRFFAFHFILPFIIMALAVVHLLFLHETGSNNPSGINPDSDKIPFHPYYTIKDALGFMLLLLVLLLLALFSPDLLGDPDNFSPANPLNTPPHIKPEWYFLFAYAILRSIPNKLGGVLAVLASILILLIIPLLHTANQRSMMFRPVSQTLFWILTANLITLTWIGGHPVEQPFIIIGQLAPMPYFLLILVMMPLAGLFENYMLKPEW.

4 helical membrane-spanning segments follow: residues 33–53 (FGSL…FLAM), 77–98 (WLLR…FLHV), 113–133 (WNIG…GYVL), and 178–198 (FFAF…VHLL). 2 residues coordinate heme b: His83 and His97. The heme b site is built by His182 and His196. His201 is an a ubiquinone binding site. Helical transmembrane passes span 226-246 (IKDA…ALFS), 288-308 (LGGV…PLLH), 320-340 (VSQT…WIGG), and 347-367 (FIII…VMMP).

Belongs to the cytochrome b family. In terms of assembly, the cytochrome bc1 complex contains 11 subunits: 3 respiratory subunits (MT-CYB, CYC1 and UQCRFS1), 2 core proteins (UQCRC1 and UQCRC2) and 6 low-molecular weight proteins (UQCRH/QCR6, UQCRB/QCR7, UQCRQ/QCR8, UQCR10/QCR9, UQCR11/QCR10 and a cleavage product of UQCRFS1). This cytochrome bc1 complex then forms a dimer. It depends on heme b as a cofactor.

The protein resides in the mitochondrion inner membrane. Its function is as follows. Component of the ubiquinol-cytochrome c reductase complex (complex III or cytochrome b-c1 complex) that is part of the mitochondrial respiratory chain. The b-c1 complex mediates electron transfer from ubiquinol to cytochrome c. Contributes to the generation of a proton gradient across the mitochondrial membrane that is then used for ATP synthesis. The protein is Cytochrome b (MT-CYB) of Dasyurus hallucatus (Northern quoll).